A 173-amino-acid chain; its full sequence is Protein tyrosine phosphatase type IVA 1 (173 aa).

One can recognise a Tyrosine-protein phosphatase domain in the interval 8–161 (APVEVTYKNM…YRPKMRLRFK (154 aa)). A disulfide bridge links cysteine 49 with cysteine 104. The active-site Proton donor is aspartate 72. Residues 97 to 132 (GCCIAVHCVAGLGRAPVLVALALIEGGMKYEDAVQF) are interaction with ATF5. Catalysis depends on cysteine 104, which acts as the Phosphocysteine intermediate. Position 105–110 (105–110 (VAGLGR)) interacts with phosphate. Arginine 110 contributes to the substrate binding site. At cysteine 170 the chain carries Cysteine methyl ester. A lipid anchor (S-farnesyl cysteine) is attached at cysteine 170. Positions 171 to 173 (CIQ) are cleaved as a propeptide — removed in mature form.

The protein belongs to the protein-tyrosine phosphatase family. As to quaternary structure, homotrimer. Interacts with ATF5 and tubulin. Farnesylated. Farnesylation is required for membrane targeting.

It localises to the cell membrane. Its subcellular location is the early endosome. The protein localises to the endoplasmic reticulum. It is found in the cytoplasm. The protein resides in the cytoskeleton. It localises to the spindle. Its subcellular location is the nucleus. The catalysed reaction is O-phospho-L-tyrosyl-[protein] + H2O = L-tyrosyl-[protein] + phosphate. With respect to regulation, inhibited by sodium orthovanadate and pentamidine. Its function is as follows. Protein tyrosine phosphatase which stimulates progression from G1 into S phase during mitosis. May play a role in the development and maintenance of differentiating epithelial tissues. This Pongo abelii (Sumatran orangutan) protein is Protein tyrosine phosphatase type IVA 1 (PTP4A1).